We begin with the raw amino-acid sequence, 939 residues long: Vacuolar membrane protease (939 aa).

The Cytoplasmic portion of the chain corresponds to 1–11; that stretch reads MGFNSIFKFRK. A helical transmembrane segment spans residues 12–32; sequence TSLSLLLFAVYFIIGILYFID. The Vacuolar segment spans residues 33–356; it reads KTRYKHSLPI…TFVAIPSTKL (324 aa). N-linked (GlcNAc...) asparagine glycosylation is found at Asn-59, Asn-88, and Asn-114. Positions 149 and 161 each coordinate Zn(2+). Glu-193 (proton acceptor) is an active-site residue. Zn(2+) contacts are provided by Glu-194, Glu-219, and His-293. N-linked (GlcNAc...) asparagine glycosylation occurs at Asn-326. The helical transmembrane segment at 357–377 threads the bilayer; it reads FWINIALLIIMPIISIFLFSI. At 378-388 the chain is on the cytoplasmic side; it reads VKKYNNEIIDS. The chain crosses the membrane as a helical span at residues 389-409; the sequence is GNIWWRLPISAMSSGTIIIFT. The Vacuolar segment spans residues 410-424; that stretch reads TKLIMKWNPYILSRN. A helical transmembrane segment spans residues 425-445; that stretch reads FLLPLIGLTFEFIILNSYILT. At 446–453 the chain is on the cytoplasmic side; it reads MFENLSSS. The chain crosses the membrane as a helical span at residues 454 to 474; it reads FDFKTIAINEISFLFWIVLAY. Over 475-491 the chain is Vacuolar; it reads QTWKLYDNNYQNTGIYP. A helical membrane pass occupies residues 492-512; sequence FTICYIVMATAGNIGYLFLIF. Over 513–588 the chain is Cytoplasmic; the sequence is KNIEIVEDEE…NQRTILKESK (76 aa). Residues 540–552 show a composition bias toward basic and acidic residues; that stretch reads YRDEINGRDDSSR. Residues 540-561 are disordered; it reads YRDEINGRDDSSRDSNSASIPT. Residues 589-609 form a helical membrane-spanning segment; that stretch reads LVYNYDWIIEFLLVVPFSTFL. The Vacuolar portion of the chain corresponds to 610–636; sequence LYNSLELIMDAVNQTIQETGDLYKVYK. Asn-622 carries an N-linked (GlcNAc...) asparagine glycan. The chain crosses the membrane as a helical span at residues 637-657; that stretch reads ILAIGSILISIPTLPFAYKIG. At 658-663 the chain is on the cytoplasmic side; that stretch reads CQLGKT. Residues 664 to 684 traverse the membrane as a helical segment; it reads LTFISIGCLLISMALAPFTEM. At 685–939 the chain is on the vacuolar side; it reads NPIKFRFMQV…LVKLTEAMVL (255 aa). 2 N-linked (GlcNAc...) asparagine glycosylation sites follow: Asn-810 and Asn-820.

This sequence belongs to the peptidase M28 family. Zn(2+) is required as a cofactor.

The protein localises to the vacuole membrane. Functionally, may be involved in vacuolar sorting and osmoregulation. The polypeptide is Vacuolar membrane protease (Vanderwaltozyma polyspora (strain ATCC 22028 / DSM 70294 / BCRC 21397 / CBS 2163 / NBRC 10782 / NRRL Y-8283 / UCD 57-17) (Kluyveromyces polysporus)).